Here is a 670-residue protein sequence, read N- to C-terminus: ATP synthase subunit alpha 2 (670 aa).

Residue 180 to 187 (GDRATGKT) participates in ATP binding. Positions 527-670 (AEDAAGDIGG…DAEAEARHKR (144 aa)) are disordered. Residues 543–588 (ARGDADRDADHGANREVSREVSPEASREVSREVSREVSHEADRDAA) are compositionally biased toward basic and acidic residues. Residues 589 to 599 (ADAARVAGRAP) show a composition bias toward low complexity. The span at 621–639 (ADGDRASASRPRPDARGDA) shows a compositional bias: basic and acidic residues. The segment covering 640-661 (ARTAPSPQGGAEVNVNAAANVD) has biased composition (low complexity).

The protein belongs to the ATPase alpha/beta chains family. F-type ATPases have 2 components, CF(1) - the catalytic core - and CF(0) - the membrane proton channel. CF(1) has five subunits: alpha(3), beta(3), gamma(1), delta(1), epsilon(1). CF(0) has three main subunits: a(1), b(2) and c(9-12). The alpha and beta chains form an alternating ring which encloses part of the gamma chain. CF(1) is attached to CF(0) by a central stalk formed by the gamma and epsilon chains, while a peripheral stalk is formed by the delta and b chains.

The protein resides in the cell inner membrane. The catalysed reaction is ATP + H2O + 4 H(+)(in) = ADP + phosphate + 5 H(+)(out). Produces ATP from ADP in the presence of a proton gradient across the membrane. The alpha chain is a regulatory subunit. In Burkholderia pseudomallei (strain 668), this protein is ATP synthase subunit alpha 2.